Here is a 621-residue protein sequence, read N- to C-terminus: DDB1- and CUL4-associated factor 10 homolog (621 aa).

WD repeat units lie at residues 46-85 (GRTGAIFNLEFNADGNVVVAATERKCVLVFDAITQKEIFK), 89-127 (AHTDSVNCIKFFDERLFATGSDDFTVALWDLRNMKQKLR), 131-170 (GHSNWVKNIEYSSKDKLLVSSGFDGSIFTWDINSQTEQGL), and 176-215 (FHASGLMRCRISPTGDKLVLCTSGGYIMIIHHLDLTTLHK). 2 disordered regions span residues 305 to 349 (VRSE…PRQA) and 437 to 483 (LMGS…TTVR). Residue Ser-307 is modified to Phosphoserine. Over residues 324 to 342 (STTLASRSSLNESQDQDTV) the composition is skewed to polar residues. The span at 454–478 (ESNQSSSSSSSSSSSSSSSSSSNNS) shows a compositional bias: low complexity. Phosphoserine is present on residues Ser-494 and Ser-497. The stretch at 588-621 (EHQDVVLCAKFSPREPLLVTGCNGGEVTWYRPNL) is one WD 5 repeat.

The protein belongs to the WD repeat DCAF10 family.

This chain is DDB1- and CUL4-associated factor 10 homolog, found in Drosophila melanogaster (Fruit fly).